The following is a 552-amino-acid chain: Probable protein kinase UbiB (552 aa).

In terms of domain architecture, Protein kinase spans 121–504; the sequence is HFDTVPLASA…QGLQRRVVNA (384 aa). ATP is bound by residues 127 to 135 and Lys-149; that span reads LASASISQV. Residue Asp-284 is the Proton acceptor of the active site. The next 2 helical transmembrane spans lie at 501-521 and 530-550; these read VVNA…YGLH and IPVW…SAWW.

This sequence belongs to the ABC1 family. UbiB subfamily.

It localises to the cell inner membrane. Its pathway is cofactor biosynthesis; ubiquinone biosynthesis [regulation]. Functionally, is probably a protein kinase regulator of UbiI activity which is involved in aerobic coenzyme Q (ubiquinone) biosynthesis. This chain is Probable protein kinase UbiB, found in Xylella fastidiosa (strain M23).